The chain runs to 931 residues: Isoleucine--tRNA ligase (931 aa).

Polar residues predominate over residues 1–14; sequence MDYSKTLNLPQTQF. Residues 1 to 25 are disordered; the sequence is MDYSKTLNLPQTQFPMRGNLPQREP. Positions 57–67 match the 'HIGH' region motif; it reads PYANGHIHLGH. Glu-559 provides a ligand contact to L-isoleucyl-5'-AMP. The 'KMSKS' region signature appears at 600–604; it reads KMSKS. Lys-603 is an ATP binding site. Residues Cys-898, Cys-901, Cys-918, and Cys-921 each coordinate Zn(2+).

This sequence belongs to the class-I aminoacyl-tRNA synthetase family. IleS type 1 subfamily. In terms of assembly, monomer. Requires Zn(2+) as cofactor.

The protein resides in the cytoplasm. It catalyses the reaction tRNA(Ile) + L-isoleucine + ATP = L-isoleucyl-tRNA(Ile) + AMP + diphosphate. Functionally, catalyzes the attachment of isoleucine to tRNA(Ile). As IleRS can inadvertently accommodate and process structurally similar amino acids such as valine, to avoid such errors it has two additional distinct tRNA(Ile)-dependent editing activities. One activity is designated as 'pretransfer' editing and involves the hydrolysis of activated Val-AMP. The other activity is designated 'posttransfer' editing and involves deacylation of mischarged Val-tRNA(Ile). The protein is Isoleucine--tRNA ligase of Desulforamulus reducens (strain ATCC BAA-1160 / DSM 100696 / MI-1) (Desulfotomaculum reducens).